Consider the following 400-residue polypeptide: Subtilisin-like protease 2 (400 aa).

The signal sequence occupies residues 1-20; it reads MKFSQSLIALAACFLPLIAA. A propeptide spanning residues 21-119 is cleaved from the precursor; the sequence is APEEAQHAKI…IERDGKVQAN (99 aa). An Inhibitor I9 domain is found at 42 to 117; that stretch reads SYIVVFNKGV…AWIERDGKVQ (76 aa). The N-linked (GlcNAc...) asparagine glycan is linked to Asn82. Residues 128-400 enclose the Peptidase S8 domain; that stretch reads TWGLGRISHK…NLIAYNGNGA (273 aa). Active-site charge relay system residues include Asp160, His192, and Ser345.

This sequence belongs to the peptidase S8 family.

Its subcellular location is the secreted. Its activity is regulated as follows. Potently inhibited by the serine peptidase inhibitor chymostatin. Also inhibited by antpain and PMSF. Major secreted subtilisin-like serine endopeptidase. Preferentially cleaves substrates containing hydrophobic residues at P4, positively charged residues at P3, small or flexible residues at P2, and large, bulky residues at P1. Mediates the degradation of collagen, the major structural protein in the mammalian host. Degrades the nonhelical regions of collagen that function in the cross-linking of the helical components. May function as virulence factor involved in epidermal wing necrosis observed in white nose syndrome (WNS) in bats. This is Subtilisin-like protease 2 from Pseudogymnoascus destructans (strain ATCC MYA-4855 / 20631-21) (Bat white-nose syndrome fungus).